The primary structure comprises 382 residues: D-alanine--D-alanine ligase (382 aa).

The ATP-grasp domain maps to 161 to 372 (KVVFESAGLH…YAELIDELIH (212 aa)). 193–248 (VDRLGFPVFVKPARAGSSMGISKVDSLEGLDAAIEEARRHDLKLVIEAGIVGREIE) is an ATP binding site. Asp326, Glu339, and Asn341 together coordinate Mg(2+).

Belongs to the D-alanine--D-alanine ligase family. It depends on Mg(2+) as a cofactor. Mn(2+) is required as a cofactor.

It localises to the cytoplasm. The catalysed reaction is 2 D-alanine + ATP = D-alanyl-D-alanine + ADP + phosphate + H(+). Its pathway is cell wall biogenesis; peptidoglycan biosynthesis. Cell wall formation. The polypeptide is D-alanine--D-alanine ligase (Pseudarthrobacter chlorophenolicus (strain ATCC 700700 / DSM 12829 / CIP 107037 / JCM 12360 / KCTC 9906 / NCIMB 13794 / A6) (Arthrobacter chlorophenolicus)).